We begin with the raw amino-acid sequence, 340 residues long: DNA-directed RNA polymerase subunit alpha (340 aa).

The tract at residues 1-236 (MLSLSKNWNT…EQLQLFISFE (236 aa)) is alpha N-terminal domain (alpha-NTD). The tract at residues 251 to 340 (FSPYLLKRVD…LSKRYEDSYN (90 aa)) is alpha C-terminal domain (alpha-CTD).

This sequence belongs to the RNA polymerase alpha chain family. Homodimer. The RNAP catalytic core consists of 2 alpha, 1 beta, 1 beta' and 1 omega subunit. When a sigma factor is associated with the core the holoenzyme is formed, which can initiate transcription.

It catalyses the reaction RNA(n) + a ribonucleoside 5'-triphosphate = RNA(n+1) + diphosphate. Functionally, DNA-dependent RNA polymerase catalyzes the transcription of DNA into RNA using the four ribonucleoside triphosphates as substrates. The protein is DNA-directed RNA polymerase subunit alpha of Rickettsia rickettsii (strain Iowa).